A 446-amino-acid polypeptide reads, in one-letter code: Argininosuccinate synthase (446 aa).

ATP is bound by residues 17-25 (AFSGGLDTS) and A43. An L-citrulline-binding site is contributed by Y99. 2 residues coordinate ATP: G129 and T131. T131, N135, and D136 together coordinate L-aspartate. L-citrulline is bound at residue N135. Residue D136 participates in ATP binding. 2 residues coordinate L-citrulline: R139 and S192. D194 contacts ATP. T201, E203, and E280 together coordinate L-citrulline.

It belongs to the argininosuccinate synthase family. Type 2 subfamily. Homotetramer.

Its subcellular location is the cytoplasm. It catalyses the reaction L-citrulline + L-aspartate + ATP = 2-(N(omega)-L-arginino)succinate + AMP + diphosphate + H(+). It functions in the pathway amino-acid biosynthesis; L-arginine biosynthesis; L-arginine from L-ornithine and carbamoyl phosphate: step 2/3. This is Argininosuccinate synthase from Burkholderia thailandensis (strain ATCC 700388 / DSM 13276 / CCUG 48851 / CIP 106301 / E264).